The primary structure comprises 123 residues: Small ribosomal subunit protein eS8 (123 aa).

Residues 1-38 are disordered; it reads MKDQGRSPRKRTGGRRRPNHKKKKHELGKDTVETQVGE. Basic residues predominate over residues 7-26; it reads SPRKRTGGRRRPNHKKKKHE.

As to quaternary structure, part of the 30S ribosomal subunit.

The chain is Small ribosomal subunit protein eS8 (rps8e) from Haloarcula marismortui (strain ATCC 43049 / DSM 3752 / JCM 8966 / VKM B-1809) (Halobacterium marismortui).